The sequence spans 108 residues: Nucleoid-associated protein Bcen_6253 (108 aa).

The segment covering 85 to 95 (ATSQEKMSGMT) has biased composition (polar residues). The segment at 85–108 (ATSQEKMSGMTSGLPLPPGFKLPF) is disordered. A compositionally biased stretch (pro residues) spans 99–108 (PLPPGFKLPF).

Belongs to the YbaB/EbfC family. In terms of assembly, homodimer.

Its subcellular location is the cytoplasm. The protein resides in the nucleoid. Functionally, binds to DNA and alters its conformation. May be involved in regulation of gene expression, nucleoid organization and DNA protection. The polypeptide is Nucleoid-associated protein Bcen_6253 (Burkholderia orbicola (strain AU 1054)).